The sequence spans 180 residues: Translation initiation factor IF-3 (180 aa).

Belongs to the IF-3 family. Monomer.

Its subcellular location is the cytoplasm. In terms of biological role, IF-3 binds to the 30S ribosomal subunit and shifts the equilibrium between 70S ribosomes and their 50S and 30S subunits in favor of the free subunits, thus enhancing the availability of 30S subunits on which protein synthesis initiation begins. This chain is Translation initiation factor IF-3, found in Salmonella paratyphi A (strain ATCC 9150 / SARB42).